The following is a 366-amino-acid chain: tRNA-specific 2-thiouridylase MnmA (366 aa).

ATP-binding positions include 10–17 (GLSGGVDS) and Met-36. Residues 96–98 (NPD) form an interaction with target base in tRNA region. Cys-101 acts as the Nucleophile in catalysis. An intrachain disulfide couples Cys-101 to Cys-197. Gly-125 lines the ATP pocket. The segment at 147–149 (KDQ) is interaction with tRNA. The active-site Cysteine persulfide intermediate is Cys-197. Residues 309–310 (RY) are interaction with tRNA.

It belongs to the MnmA/TRMU family.

The protein localises to the cytoplasm. The enzyme catalyses S-sulfanyl-L-cysteinyl-[protein] + uridine(34) in tRNA + AH2 + ATP = 2-thiouridine(34) in tRNA + L-cysteinyl-[protein] + A + AMP + diphosphate + H(+). Its function is as follows. Catalyzes the 2-thiolation of uridine at the wobble position (U34) of tRNA, leading to the formation of s(2)U34. In Alkalilimnicola ehrlichii (strain ATCC BAA-1101 / DSM 17681 / MLHE-1), this protein is tRNA-specific 2-thiouridylase MnmA.